Consider the following 493-residue polypeptide: MALYIIFLLIASSFILFSFIFSQKPKGKLPPGPPKLPIIGNIHQTVGGLPHYVFRDLAKKYGPIMHLQLGQVSIMVVSSPRLAEEVLKTNDIVVANRPYSLVGDIVLYGSSDVAFGSYGDYWRQMKKIMTVEVLSAKKVAAISGTRQQEVNNLMEYIRSTCGKPFHVREHVMQRNNNIICKSLFGDNCKQQHVLIESLDEMMKLSTGFNVSDLFPNWGFLPVISGYKSTLTRIHKNIDSILSEIFEERKIKRQKGGASDEDMLDVLLNIKERGGLEFPVADNNIKAIFVNMFVGGTDTSVATIEWAMTELMRNPKVMSKAQAEVRQLFKGKNTILDKDLQDLVYLKYIIKETLRLHPVVPILLPRECRGPCKIGGYDIPMNTVLFVNAFACSTDPEYWDDAESFKPERFENSSLDLNGRACEYLPFGAGRRMCPGITFGMSVVEIILAQLLYYFNWELPNGLSPNDIDLTPNFGAVADKKVPLQIVPTLNSLK.

Residues Met-1–Phe-21 traverse the membrane as a helical; Signal-anchor for type II membrane protein segment. N-linked (GlcNAc...) asparagine glycans are attached at residues Asn-209 and Asn-411. A heme-binding site is contributed by Cys-433.

The protein belongs to the cytochrome P450 family. It depends on heme as a cofactor.

The protein resides in the membrane. The protein operates within secondary metabolite biosynthesis; terpenoid biosynthesis. Functionally, probably involved in the biosynthesis of germacrene-derived sesquiterpene lactones. The chain is Cytochrome P450 Tp9025 from Tanacetum parthenium (Feverfew).